Consider the following 186-residue polypeptide: Translation initiation factor IF-3 (186 aa).

It belongs to the IF-3 family. In terms of assembly, monomer.

It localises to the cytoplasm. Its function is as follows. IF-3 binds to the 30S ribosomal subunit and shifts the equilibrium between 70S ribosomes and their 50S and 30S subunits in favor of the free subunits, thus enhancing the availability of 30S subunits on which protein synthesis initiation begins. This chain is Translation initiation factor IF-3, found in Borreliella burgdorferi (strain ATCC 35210 / DSM 4680 / CIP 102532 / B31) (Borrelia burgdorferi).